The chain runs to 213 residues: tRNA (guanine-N(7)-)-methyltransferase (213 aa).

S-adenosyl-L-methionine-binding residues include E44, E69, D96, and D118. The active site involves D118. Substrate contacts are provided by residues K122, D154, and 191 to 194 (TEYE).

The protein belongs to the class I-like SAM-binding methyltransferase superfamily. TrmB family.

The enzyme catalyses guanosine(46) in tRNA + S-adenosyl-L-methionine = N(7)-methylguanosine(46) in tRNA + S-adenosyl-L-homocysteine. Its pathway is tRNA modification; N(7)-methylguanine-tRNA biosynthesis. In terms of biological role, catalyzes the formation of N(7)-methylguanine at position 46 (m7G46) in tRNA. The protein is tRNA (guanine-N(7)-)-methyltransferase of Exiguobacterium sibiricum (strain DSM 17290 / CCUG 55495 / CIP 109462 / JCM 13490 / 255-15).